A 109-amino-acid chain; its full sequence is uncharacterized protein (109 aa).

A helical membrane pass occupies residues 12-32; the sequence is PNILIKGVYIFVLYGMCICIV.

The protein localises to the membrane. This is an uncharacterized protein from Saccharomyces cerevisiae (strain ATCC 204508 / S288c) (Baker's yeast).